Reading from the N-terminus, the 295-residue chain is Small ribosomal subunit protein uS2 (295 aa).

The interval 260–295 is disordered; sequence KQAKKFSKTKNIDEETNTEFEQALNDADENKNSDNA.

It belongs to the universal ribosomal protein uS2 family.

This is Small ribosomal subunit protein uS2 from Rickettsia felis (strain ATCC VR-1525 / URRWXCal2) (Rickettsia azadi).